A 1217-amino-acid polypeptide reads, in one-letter code: Valine--tRNA ligase (1217 aa).

Positions 27–155 constitute a GST C-terminal domain; sequence NAKQQSQVWQ…ISLCEKMVPV (129 aa). A 'HIGH' region motif is present at residues 293 to 303; the sequence is PNVTGSLHLGH. The short motif at 809–813 is the 'KMSKS' region element; the sequence is KMSKS. Residue Lys-812 coordinates ATP.

It belongs to the class-I aminoacyl-tRNA synthetase family.

The enzyme catalyses tRNA(Val) + L-valine + ATP = L-valyl-tRNA(Val) + AMP + diphosphate. This chain is Valine--tRNA ligase (vars1), found in Takifugu rubripes (Japanese pufferfish).